The sequence spans 98 residues: NADH-ubiquinone oxidoreductase chain 4L (98 aa).

A run of 3 helical transmembrane segments spans residues 1-21 (MSITTLNIMVAFMMALLGMFV), 29-49 (SLLCLEGMMLSLFMLATIVSL), and 61-81 (VILLVFAACEAAVGLALLIMV).

Belongs to the complex I subunit 4L family. In terms of assembly, core subunit of respiratory chain NADH dehydrogenase (Complex I) which is composed of 45 different subunits.

The protein resides in the mitochondrion inner membrane. It catalyses the reaction a ubiquinone + NADH + 5 H(+)(in) = a ubiquinol + NAD(+) + 4 H(+)(out). In terms of biological role, core subunit of the mitochondrial membrane respiratory chain NADH dehydrogenase (Complex I) which catalyzes electron transfer from NADH through the respiratory chain, using ubiquinone as an electron acceptor. Part of the enzyme membrane arm which is embedded in the lipid bilayer and involved in proton translocation. The protein is NADH-ubiquinone oxidoreductase chain 4L (MT-ND4L) of Ochotona princeps (Southern American pika).